Here is a 420-residue protein sequence, read N- to C-terminus: Glucose-1-phosphate adenylyltransferase (420 aa).

Alpha-D-glucose 1-phosphate contacts are provided by residues tyrosine 107, glycine 172, 187-188, and serine 205; that span reads EK.

The protein belongs to the bacterial/plant glucose-1-phosphate adenylyltransferase family. Homotetramer.

The catalysed reaction is alpha-D-glucose 1-phosphate + ATP + H(+) = ADP-alpha-D-glucose + diphosphate. It participates in glycan biosynthesis; glycogen biosynthesis. Its function is as follows. Involved in the biosynthesis of ADP-glucose, a building block required for the elongation reactions to produce glycogen. Catalyzes the reaction between ATP and alpha-D-glucose 1-phosphate (G1P) to produce pyrophosphate and ADP-Glc. The sequence is that of Glucose-1-phosphate adenylyltransferase from Rhizobium johnstonii (strain DSM 114642 / LMG 32736 / 3841) (Rhizobium leguminosarum bv. viciae).